Reading from the N-terminus, the 48-residue chain is uncharacterized protein (48 aa).

Residues 6–26 (IILLMIVCLVVSVLVVVWIIL) traverse the membrane as a helical segment.

Its subcellular location is the host membrane. This is an uncharacterized protein from Spiroplasma melliferum (SpV4).